Consider the following 298-residue polypeptide: MLSEGYLSGLTYWNDIHWNCASYNEPVAGDQGKETSSVAALSYSSVDETQVQSLYVSCKSSGKFISSVHARASQHSRSQSRTVLQANSNPVFESPTLAAVGICRDVIRETYLVPPSCKSICKNYNDLHIAGGQVMAINSVMANFPSESSFEDGPLLKSSEISLSMEDSTSTQLTELPLKPIQRYSSYWRITSIKEKSSLQMQKPISNAVLNEYLEQKVVELYKQYIMDTVFHDSSPTQILASEFIMTNVDQISLQVSKEKNLDTSKVKDIVISHLLQLVSSEISTPSLHISQYSNITP.

The short motif at 287–291 is the pLxIS motif element; it reads SLHIS. Serine 291 is modified (phosphoserine).

Interacts (via pLxIS motif) with IRF5; leading to IRF5 activation. Interacts with SLC15A4; leading to its recruitment to endolysosome. Post-translationally, the phosphorylated pLxIS motif constitutes an IRF5-binding motif, leading to recruitment of the transcription factor IRF5 to induce type-I interferons and other cytokines.

The protein resides in the lysosome membrane. The protein localises to the endosome membrane. It localises to the nucleus. Its subcellular location is the cytoplasm. In terms of biological role, innate immune adapter that mediates the recruitment and activation of IRF5 downstream of endolysosomal toll-like receptors TLR7, TLR8 and TLR9. Following recruitment to endolysosome by SLC15A4 downstream of TLR7, TLR8 and TLR9, specifically recruits IRF5 transcription factor via its pLxIS motif, leading to IRF5 activation and subsequent expression of type I interferons. Plays a role in the regulation of endolysosomal pH in immune cells such as B-cells, dendritic cells and monocytes. The protein is TLR adapter interacting with SLC15A4 on the lysosome of Mus musculus (Mouse).